We begin with the raw amino-acid sequence, 198 residues long: FMN-dependent NADH:quinone oxidoreductase (198 aa).

92–95 (MWNL) contributes to the FMN binding site.

This sequence belongs to the azoreductase type 1 family. As to quaternary structure, homodimer. FMN is required as a cofactor.

The catalysed reaction is 2 a quinone + NADH + H(+) = 2 a 1,4-benzosemiquinone + NAD(+). The enzyme catalyses N,N-dimethyl-1,4-phenylenediamine + anthranilate + 2 NAD(+) = 2-(4-dimethylaminophenyl)diazenylbenzoate + 2 NADH + 2 H(+). Quinone reductase that provides resistance to thiol-specific stress caused by electrophilic quinones. In terms of biological role, also exhibits azoreductase activity. Catalyzes the reductive cleavage of the azo bond in aromatic azo compounds to the corresponding amines. This chain is FMN-dependent NADH:quinone oxidoreductase, found in Lachnoclostridium phytofermentans (strain ATCC 700394 / DSM 18823 / ISDg) (Clostridium phytofermentans).